Reading from the N-terminus, the 250-residue chain is 5-oxoprolinase subunit A (250 aa).

It belongs to the LamB/PxpA family. As to quaternary structure, forms a complex composed of PxpA, PxpB and PxpC.

It catalyses the reaction 5-oxo-L-proline + ATP + 2 H2O = L-glutamate + ADP + phosphate + H(+). Catalyzes the cleavage of 5-oxoproline to form L-glutamate coupled to the hydrolysis of ATP to ADP and inorganic phosphate. The protein is 5-oxoprolinase subunit A of Staphylococcus aureus (strain bovine RF122 / ET3-1).